The chain runs to 364 residues: Dual-specificity RNA methyltransferase RlmN (364 aa).

The active-site Proton acceptor is glutamate 91. Residues 97–333 (ESDRGTLCIS…VTVRKTRGDD (237 aa)) form the Radical SAM core domain. Cysteine 104 and cysteine 338 are joined by a disulfide. 3 residues coordinate [4Fe-4S] cluster: cysteine 111, cysteine 115, and cysteine 118. Residues 164–165 (GE), serine 196, 218–220 (SLH), and asparagine 295 each bind S-adenosyl-L-methionine. Cysteine 338 (S-methylcysteine intermediate) is an active-site residue.

This sequence belongs to the radical SAM superfamily. RlmN family. Requires [4Fe-4S] cluster as cofactor.

It is found in the cytoplasm. The enzyme catalyses adenosine(2503) in 23S rRNA + 2 reduced [2Fe-2S]-[ferredoxin] + 2 S-adenosyl-L-methionine = 2-methyladenosine(2503) in 23S rRNA + 5'-deoxyadenosine + L-methionine + 2 oxidized [2Fe-2S]-[ferredoxin] + S-adenosyl-L-homocysteine. It catalyses the reaction adenosine(37) in tRNA + 2 reduced [2Fe-2S]-[ferredoxin] + 2 S-adenosyl-L-methionine = 2-methyladenosine(37) in tRNA + 5'-deoxyadenosine + L-methionine + 2 oxidized [2Fe-2S]-[ferredoxin] + S-adenosyl-L-homocysteine. Its function is as follows. Specifically methylates position 2 of adenine 2503 in 23S rRNA and position 2 of adenine 37 in tRNAs. m2A2503 modification seems to play a crucial role in the proofreading step occurring at the peptidyl transferase center and thus would serve to optimize ribosomal fidelity. The chain is Dual-specificity RNA methyltransferase RlmN from Neisseria gonorrhoeae (strain ATCC 700825 / FA 1090).